The chain runs to 249 residues: Phosphate import ATP-binding protein PstB (249 aa).

The ABC transporter domain occupies 5–244 (LRIEDLHFWY…PEKDRTEAYV (240 aa)). 37-44 (GPSGCGKS) lines the ATP pocket.

Belongs to the ABC transporter superfamily. Phosphate importer (TC 3.A.1.7) family. As to quaternary structure, the complex is composed of two ATP-binding proteins (PstB), two transmembrane proteins (PstC and PstA) and a solute-binding protein (PstS).

The protein resides in the cell inner membrane. The enzyme catalyses phosphate(out) + ATP + H2O = ADP + 2 phosphate(in) + H(+). Part of the ABC transporter complex PstSACB involved in phosphate import. Responsible for energy coupling to the transport system. This is Phosphate import ATP-binding protein PstB from Salinibacter ruber (strain DSM 13855 / M31).